Here is a 156-residue protein sequence, read N- to C-terminus: 6,7-dimethyl-8-ribityllumazine synthase (156 aa).

Residues F23, 57-59 (AFE), and 81-83 (AVI) contribute to the 5-amino-6-(D-ribitylamino)uracil site. 86 to 87 (ST) lines the (2S)-2-hydroxy-3-oxobutyl phosphate pocket. H89 acts as the Proton donor in catalysis. F114 contacts 5-amino-6-(D-ribitylamino)uracil. R128 contributes to the (2S)-2-hydroxy-3-oxobutyl phosphate binding site.

Belongs to the DMRL synthase family.

It carries out the reaction (2S)-2-hydroxy-3-oxobutyl phosphate + 5-amino-6-(D-ribitylamino)uracil = 6,7-dimethyl-8-(1-D-ribityl)lumazine + phosphate + 2 H2O + H(+). The protein operates within cofactor biosynthesis; riboflavin biosynthesis; riboflavin from 2-hydroxy-3-oxobutyl phosphate and 5-amino-6-(D-ribitylamino)uracil: step 1/2. Its function is as follows. Catalyzes the formation of 6,7-dimethyl-8-ribityllumazine by condensation of 5-amino-6-(D-ribitylamino)uracil with 3,4-dihydroxy-2-butanone 4-phosphate. This is the penultimate step in the biosynthesis of riboflavin. This Campylobacter fetus subsp. fetus (strain 82-40) protein is 6,7-dimethyl-8-ribityllumazine synthase.